The primary structure comprises 226 residues: 7-cyano-7-deazaguanine synthase (226 aa).

7-17 (ISGGMDSLVVA) is a binding site for ATP. Positions 187, 195, 198, and 201 each coordinate Zn(2+).

The protein belongs to the QueC family. Zn(2+) is required as a cofactor.

It carries out the reaction 7-carboxy-7-deazaguanine + NH4(+) + ATP = 7-cyano-7-deazaguanine + ADP + phosphate + H2O + H(+). Its pathway is purine metabolism; 7-cyano-7-deazaguanine biosynthesis. Catalyzes the ATP-dependent conversion of 7-carboxy-7-deazaguanine (CDG) to 7-cyano-7-deazaguanine (preQ(0)). This is 7-cyano-7-deazaguanine synthase from Chlorobium phaeobacteroides (strain BS1).